The chain runs to 376 residues: Salivary hyaluronidase (376 aa).

An N-terminal signal peptide occupies residues 1–16; it reads MNWIFHLFCAVYGIFC. 2 disulfides stabilise this stretch: Cys32–Cys328 and Cys203–Cys217. Residues Asn36, Asn55, Asn77, and Asn88 are each glycosylated (N-linked (GlcNAc...) asparagine). The Proton donor role is filled by Glu118. Residues Asn143, Asn153, Asn181, Asn214, Asn226, Asn248, Asn287, Asn321, Asn336, Asn356, and Asn371 are each glycosylated (N-linked (GlcNAc...) asparagine).

The protein belongs to the glycosyl hydrolase 56 family. In terms of processing, glycosylated; glycosylation is critical for enzymatic activity. As to expression, female salivary gland (at protein level).

The protein localises to the secreted. It catalyses the reaction Random hydrolysis of (1-&gt;4)-linkages between N-acetyl-beta-D-glucosamine and D-glucuronate residues in hyaluronate.. In terms of biological role, hydrolyzes high molecular weight hyaluronic acid to produce small oligosaccharides. Up-regulates expression of CSF2, CSF3, LIF, CXCL1, CXCL2 and CXCL8 in cultured human dermal microvascular endothelial cells. Promotes host neutrophil recruitment at the injection site. Its function is as follows. (Microbial infection) Probably promotes Leishmania major infection in the host. The polypeptide is Salivary hyaluronidase (Lutzomyia longipalpis (Sand fly)).